Reading from the N-terminus, the 146-residue chain is Protein archease (146 aa).

3 residues coordinate Ca(2+): Asp-16, Asp-145, and Ile-146.

The protein belongs to the archease family.

Activates the tRNA-splicing ligase complex by facilitating the enzymatic turnover of catalytic subunit RtcB. Acts by promoting the guanylylation of RtcB, a key intermediate step in tRNA ligation. Can also alter the NTP specificity of RtcB such that ATP, dGTP or ITP is used efficiently. The protein is Protein archease of Methanosarcina barkeri (strain Fusaro / DSM 804).